A 396-amino-acid polypeptide reads, in one-letter code: Elongation factor Tu 1 (396 aa).

A tr-type G domain is found at 10 to 206 (KPHCNVGTIG…AVDDYIPQPE (197 aa)). The interval 19–26 (GHVDHGKT) is G1. Residue 19–26 (GHVDHGKT) participates in GTP binding. T26 contributes to the Mg(2+) binding site. Positions 60–64 (GITIS) are G2. A G3 region spans residues 81-84 (DCPG). Residues 81–85 (DCPGH) and 136–139 (NKCD) contribute to the GTP site. Residues 136–139 (NKCD) form a G4 region. The tract at residues 174 to 176 (SAL) is G5.

The protein belongs to the TRAFAC class translation factor GTPase superfamily. Classic translation factor GTPase family. EF-Tu/EF-1A subfamily. Monomer.

The protein resides in the cytoplasm. The catalysed reaction is GTP + H2O = GDP + phosphate + H(+). GTP hydrolase that promotes the GTP-dependent binding of aminoacyl-tRNA to the A-site of ribosomes during protein biosynthesis. The polypeptide is Elongation factor Tu 1 (Rhodospirillum rubrum (strain ATCC 11170 / ATH 1.1.1 / DSM 467 / LMG 4362 / NCIMB 8255 / S1)).